The following is a 334-amino-acid chain: Glutaminase (334 aa).

Residues Ser76, Asn126, Glu170, Asn177, Tyr201, Tyr253, and Val271 each coordinate substrate.

It belongs to the glutaminase family. As to quaternary structure, homotetramer.

It catalyses the reaction L-glutamine + H2O = L-glutamate + NH4(+). This is Glutaminase from Nostoc sp. (strain PCC 7120 / SAG 25.82 / UTEX 2576).